Here is a 308-residue protein sequence, read N- to C-terminus: Heme A synthase (308 aa).

The Cytoplasmic segment spans residues 1–8 (MFKKRNLK). Residues 9–29 (WLSILATVIMAWVQLGGALVT) form a helical membrane-spanning segment. The Extracellular segment spans residues 30-67 (KTGSENGCGASWPLCHGALLPQNLPIATIIELSHRATS). Cys37 and Cys44 are disulfide-bonded. Glu60 is an active-site residue. A heme o-binding site is contributed by His63. The helical transmembrane segment at 68–88 (ALSLIVVLWLVITAWKNIGYI) threads the bilayer. Residues 89-93 (KEVKP) lie on the Cytoplasmic side of the membrane. A helical transmembrane segment spans residues 94 to 114 (LCIISVAFLLIQALVGAAAVL). Topologically, residues 115–123 (WQQNDYVLA) are extracellular. Residues 124 to 144 (LHFGISLISFSSVFVLTLIIF) traverse the membrane as a helical segment. His125 serves as a coordination point for heme o. Residues 145-161 (DVDQKYEANKVHIDRKL) are Cytoplasmic-facing. The chain crosses the membrane as a helical span at residues 162–182 (RIYTWTMAICLYVGIYTGALV). Over 183-215 (RHTKSSLAYGSWPLPFNDLIPHTEQDWVQLAHR) the chain is Extracellular. His214 is a binding site for heme b. The helical transmembrane segment at 216–236 (TLALIASISVFLAFNYAIKHY) threads the bilayer. The Cytoplasmic portion of the chain corresponds to 237-244 (QNNRTIRY). The chain crosses the membrane as a helical span at residues 245–265 (GYTAALLLIILQIVTGALSIF). The Extracellular segment spans residues 266-270 (THVNL). Residues 271–291 (IIALLHALIITFEFGLIAYLI) traverse the membrane as a helical segment. His276 contributes to the heme b binding site. Topologically, residues 292–308 (VLLLRSQRVEKVKQNAY) are cytoplasmic.

It belongs to the COX15/CtaA family. Type 1 subfamily. As to quaternary structure, interacts with CtaB. Requires heme b as cofactor.

It is found in the cell membrane. The catalysed reaction is Fe(II)-heme o + 2 A + H2O = Fe(II)-heme a + 2 AH2. Its pathway is porphyrin-containing compound metabolism; heme A biosynthesis; heme A from heme O: step 1/1. Its function is as follows. Catalyzes the conversion of heme O to heme A by two successive hydroxylations of the methyl group at C8. The first hydroxylation forms heme I, the second hydroxylation results in an unstable dihydroxymethyl group, which spontaneously dehydrates, resulting in the formyl group of heme A. In Staphylococcus carnosus (strain TM300), this protein is Heme A synthase.